We begin with the raw amino-acid sequence, 485 residues long: NADH-quinone oxidoreductase subunit N (485 aa).

The next 14 membrane-spanning stretches (helical) occupy residues 10-30 (ILPE…GLFL), 40-60 (IFFQ…EYLI), 71-91 (VVFS…AVFV), 107-127 (GDFY…TAAH), 129-149 (LVTI…LIAI), 164-184 (FVLG…VYGM), 209-229 (FLLV…GAFP), 248-268 (IVAT…LFVG), 276-296 (WIYL…LVAL), 304-324 (LLGY…TLNP), 336-356 (VIVY…ISVG), 377-397 (AFIL…GGFI), 410-430 (GNYF…FYYV), and 454-474 (LIAL…PMLL).

It belongs to the complex I subunit 2 family. As to quaternary structure, NDH-1 is composed of 14 different subunits. Subunits NuoA, H, J, K, L, M, N constitute the membrane sector of the complex.

It is found in the cell inner membrane. The catalysed reaction is a quinone + NADH + 5 H(+)(in) = a quinol + NAD(+) + 4 H(+)(out). In terms of biological role, NDH-1 shuttles electrons from NADH, via FMN and iron-sulfur (Fe-S) centers, to quinones in the respiratory chain. The immediate electron acceptor for the enzyme in this species is believed to be ubiquinone. Couples the redox reaction to proton translocation (for every two electrons transferred, four hydrogen ions are translocated across the cytoplasmic membrane), and thus conserves the redox energy in a proton gradient. The protein is NADH-quinone oxidoreductase subunit N of Francisella tularensis subsp. holarctica (strain FTNF002-00 / FTA).